The following is a 132-amino-acid chain: Small ribosomal subunit protein uS8 (132 aa).

It belongs to the universal ribosomal protein uS8 family. As to quaternary structure, part of the 30S ribosomal subunit. Contacts proteins S5 and S12.

One of the primary rRNA binding proteins, it binds directly to 16S rRNA central domain where it helps coordinate assembly of the platform of the 30S subunit. The protein is Small ribosomal subunit protein uS8 of Flavobacterium johnsoniae (strain ATCC 17061 / DSM 2064 / JCM 8514 / BCRC 14874 / CCUG 350202 / NBRC 14942 / NCIMB 11054 / UW101) (Cytophaga johnsonae).